Here is a 492-residue protein sequence, read N- to C-terminus: Malonate-semialdehyde dehydrogenase (492 aa).

The NAD(+) site is built by Phe156, Lys180, Glu183, Lys184, Ser233, and Thr255. Cys288 functions as the Nucleophile in the catalytic mechanism. Glu387 lines the NAD(+) pocket.

It belongs to the aldehyde dehydrogenase family. IolA subfamily. As to quaternary structure, homotetramer.

The enzyme catalyses 3-oxopropanoate + NAD(+) + CoA + H2O = hydrogencarbonate + acetyl-CoA + NADH + H(+). The catalysed reaction is 2-methyl-3-oxopropanoate + NAD(+) + CoA + H2O = propanoyl-CoA + hydrogencarbonate + NADH + H(+). Its pathway is polyol metabolism; myo-inositol degradation into acetyl-CoA; acetyl-CoA from myo-inositol: step 7/7. Catalyzes the oxidation of malonate semialdehyde (MSA) and methylmalonate semialdehyde (MMSA) into acetyl-CoA and propanoyl-CoA, respectively. Is involved in a myo-inositol catabolic pathway. Bicarbonate, and not CO2, is the end-product of the enzymatic reaction. The chain is Malonate-semialdehyde dehydrogenase from Lacticaseibacillus casei (Lactobacillus casei).